A 257-amino-acid polypeptide reads, in one-letter code: Reticulon-like protein B4 (257 aa).

The disordered stretch occupies residues 19-42; it reads IHGHGDSSSLSDSDDDKKSTSSSS. One can recognise a Reticulon domain in the interval 68–257; sequence PADIFLWRNK…PRGALNKKKD (190 aa). Transmembrane regions (helical) follow at residues 78–98, 99–119, and 173–193; these read KVSG…ELFE, YHLL…LFLW, and FILV…YNFL.

As to quaternary structure, interacts with VirB2.

It is found in the endoplasmic reticulum membrane. Plays a role in the Agrobacterium-mediated plant transformation via its interaction with VirB2, the major component of the T-pilus. The protein is Reticulon-like protein B4 (RTNLB4) of Arabidopsis thaliana (Mouse-ear cress).